A 121-amino-acid polypeptide reads, in one-letter code: Large ribosomal subunit protein eL18 (121 aa).

It belongs to the eukaryotic ribosomal protein eL18 family.

This Methanocaldococcus jannaschii (strain ATCC 43067 / DSM 2661 / JAL-1 / JCM 10045 / NBRC 100440) (Methanococcus jannaschii) protein is Large ribosomal subunit protein eL18.